Here is a 234-residue protein sequence, read N- to C-terminus: RNA-binding protein pno1 (234 aa).

Positions 1 to 39 (MPTQDSAAKQADDGFQLVQKKSRKRKMTMDMDDADPKAG) are disordered. The region spanning 158–207 (LARCIGRLAGKGGRTKFTIENVTKTRIVLADSKVHILGSYQNIRAARTAL) is the KH domain.

Belongs to the PNO1 family.

The protein localises to the nucleus. Its subcellular location is the nucleolus. The protein is RNA-binding protein pno1 of Ixodes scapularis (Black-legged tick).